The chain runs to 112 residues: Protein FAM32A (112 aa).

The segment at 23 to 56 (TKRKKKKKDKDKAKMLEAMGTSKKNEEEKRRCLD) is disordered. The segment covering 45–56 (KKNEEEKRRCLD) has biased composition (basic and acidic residues).

This sequence belongs to the FAM32 family.

The protein localises to the nucleus. Its function is as follows. May induce G2 arrest and apoptosis. May also increase cell sensitivity to apoptotic stimuli. This is Protein FAM32A (Fam32a) from Rattus norvegicus (Rat).